Here is a 1330-residue protein sequence, read N- to C-terminus: G2/mitotic-specific cyclin-B3 (1330 aa).

The tract at residues 1–50 is disordered; it reads MPLPLPSRSSKPETKKSRSSKIVPSGNNGQSEKRGENYQEKISSSSPRRL. Residues 20-30 are compositionally biased toward polar residues; the sequence is SKIVPSGNNGQ. Positions 54–62 match the D-box motif; the sequence is RSAFEDLTN. Residues 1002-1059 form a disordered region; the sequence is VETSSRVPSTPPESRAGMSSVGKLSTTSKSSVCESSSNKPSSSWGESSQKEMTPLEDI. The span at 1026-1048 shows a compositional bias: low complexity; the sequence is STTSKSSVCESSSNKPSSSWGES.

Belongs to the cyclin family. Cyclin AB subfamily. As to quaternary structure, interacts with CDK2 kinase. Post-translationally, ubiquitinated. Ubiquitination leads to its degradation during anaphase entry, after degradation of CCNB1.

The protein resides in the nucleus. Its function is as follows. Cyclins are positive regulatory subunits of the cyclin-dependent kinases (CDKs), and thereby play an essential role in the control of the cell cycle, notably via their destruction during cell division. Its tissue specificity suggest that it may be required during early meiotic prophase I. This chain is G2/mitotic-specific cyclin-B3 (CCNB3), found in Canis lupus familiaris (Dog).